We begin with the raw amino-acid sequence, 382 residues long: Cytochrome b (382 aa).

4 helical membrane-spanning segments follow: residues 36–56, 80–101, 116–136, and 181–201; these read FGSL…FLTM, WLIR…YLHI, WFIG…GYVL, and FYTF…IHLL. H86 and H100 together coordinate heme b. Positions 185 and 199 each coordinate heme b. H204 contacts a ubiquinone. 4 consecutive transmembrane segments (helical) span residues 229 to 249, 291 to 311, 323 to 343, and 350 to 370; these read YKDL…TLSN, LGGV…PLTF, INQF…WIGA, and YIIT…LNPL.

This sequence belongs to the cytochrome b family. As to quaternary structure, the main subunits of complex b-c1 are: cytochrome b, cytochrome c1 and the Rieske protein. It depends on heme b as a cofactor.

The protein resides in the mitochondrion inner membrane. In terms of biological role, component of the ubiquinol-cytochrome c reductase complex (complex III or cytochrome b-c1 complex) that is part of the mitochondrial respiratory chain. The b-c1 complex mediates electron transfer from ubiquinol to cytochrome c. Contributes to the generation of a proton gradient across the mitochondrial membrane that is then used for ATP synthesis. This chain is Cytochrome b (MT-CYB), found in Samia ricini (Indian eri silkmoth).